A 274-amino-acid polypeptide reads, in one-letter code: MAVVKCKPTSPGRRHVVKVVNSELHKGKPYRPLLTKLCKTGGRNNRGCITTRHIGGGHKQHYRLIDFKRNKDGISALVERLEYDPCRSANVALLLYSDGERRYILAPKDLKKGDKVQSGVDVAIKAGNTLPMSNIPIGSTVHNVEMKPGKGAQIARSAGSYVQIIAREGFYVTLRLRSGEIRKIHSDCRATLGEVGNAEHMLRVLGKAGAKRWRGIRPTVRGTAMNPVDHPHGGGEGRNFGKHPVTPWGVQTKGKKTRNNKRTDKSIVRRRSKK.

Positions 221–274 (RGTAMNPVDHPHGGGEGRNFGKHPVTPWGVQTKGKKTRNNKRTDKSIVRRRSKK) are disordered.

Belongs to the universal ribosomal protein uL2 family. Part of the 50S ribosomal subunit. Forms a bridge to the 30S subunit in the 70S ribosome.

One of the primary rRNA binding proteins. Required for association of the 30S and 50S subunits to form the 70S ribosome, for tRNA binding and peptide bond formation. It has been suggested to have peptidyltransferase activity; this is somewhat controversial. Makes several contacts with the 16S rRNA in the 70S ribosome. The polypeptide is Large ribosomal subunit protein uL2 (Hamiltonella defensa subsp. Acyrthosiphon pisum (strain 5AT)).